We begin with the raw amino-acid sequence, 78 residues long: Omega-conotoxin-like SO-4 (78 aa).

The signal sequence occupies residues 1-22; sequence MKLTCMVIVAVLLLTACQLITA. The propeptide occupies 23-42; the sequence is DDSRGTQKHRSLRSTTKVSK. Intrachain disulfides connect cysteine 46-cysteine 62, cysteine 53-cysteine 65, and cysteine 61-cysteine 72.

This sequence belongs to the conotoxin O1 superfamily. In terms of tissue distribution, expressed by the venom duct.

The protein localises to the secreted. Its function is as follows. Omega-conotoxins act at presynaptic membranes, they bind and block voltage-gated calcium channels (Cav). The polypeptide is Omega-conotoxin-like SO-4 (SO4) (Conus striatus (Striated cone)).